The following is a 203-amino-acid chain: Cytochrome c oxidase assembly protein CtaG (203 aa).

At 1 to 16 (MADQQEKDQKLKKQQR) the chain is on the cytoplasmic side. A helical; Signal-anchor for type II membrane protein membrane pass occupies residues 17–39 (SNATIAFACLSFFVCMIGAAYAS). Over 40-203 (VPLYRIFCQV…VKAETPTNGS (164 aa)) the chain is Periplasmic.

It belongs to the COX11/CtaG family.

It localises to the cell inner membrane. In terms of biological role, exerts its effect at some terminal stage of cytochrome c oxidase synthesis, probably by being involved in the insertion of the copper B into subunit I. The sequence is that of Cytochrome c oxidase assembly protein CtaG from Brucella anthropi (strain ATCC 49188 / DSM 6882 / CCUG 24695 / JCM 21032 / LMG 3331 / NBRC 15819 / NCTC 12168 / Alc 37) (Ochrobactrum anthropi).